We begin with the raw amino-acid sequence, 401 residues long: Aspartokinase (401 aa).

This sequence belongs to the aspartokinase family.

It carries out the reaction L-aspartate + ATP = 4-phospho-L-aspartate + ADP. Its pathway is amino-acid biosynthesis; L-lysine biosynthesis via DAP pathway; (S)-tetrahydrodipicolinate from L-aspartate: step 1/4. It participates in amino-acid biosynthesis; L-methionine biosynthesis via de novo pathway; L-homoserine from L-aspartate: step 1/3. The protein operates within amino-acid biosynthesis; L-threonine biosynthesis; L-threonine from L-aspartate: step 1/5. The sequence is that of Aspartokinase (lysC) from Rickettsia felis (strain ATCC VR-1525 / URRWXCal2) (Rickettsia azadi).